A 605-amino-acid chain; its full sequence is Sodium-independent sulfate anion transporter (605 aa).

The Extracellular segment spans residues 1–50 (MPSSLKGLGQAWLSSSSMALSACCSVSAWQKRLPVLAWLPRYSLQWLKMD). A helical transmembrane segment spans residues 51-71 (FIAGLSVGLTVIPQALAYAEV). Alanine 72 is a topological domain (cytoplasmic). A helical transmembrane segment spans residues 73–93 (GLPPQYGLYSAFTGCFVYVFL). The Extracellular portion of the chain corresponds to 94–98 (GTSRD). Residues 99 to 119 (VTLGPTAIMSLLVSFYTFHEP) traverse the membrane as a helical segment. Residues 120–122 (AYA) are Cytoplasmic-facing. Residues 123-143 (VLLTFLSGCIQLAMGLLHLGF) form a helical membrane-spanning segment. Over 144 to 146 (LLD) the chain is Extracellular. Residues 147 to 167 (FISCPVIKGFTSAAAIIIGFG) traverse the membrane as a helical segment. Residues 168-196 (QIKNLLGLHNIPRQFFLQVYHTFLSVGET) are Cytoplasmic-facing. Residues 197–217 (RLGDAILGLVCMVLLLVLKLM) traverse the membrane as a helical segment. Topologically, residues 218–249 (RDRIPPVHPEMPLCVRLSCGLVWTTATARNAL) are extracellular. A helical membrane pass occupies residues 250-270 (VVSFAALVAYSFEVTGYQPFI). Residues 271–303 (LTGEIAKGLPPVRVPPFSVTMANGTVSFTRMVQ) are Cytoplasmic-facing. Residues 304 to 324 (DLGAGLAVVPLIGLLESIAVA) traverse the membrane as a helical segment. The Extracellular portion of the chain corresponds to 325–340 (KAFASQNDYHVDANQE). Residues 341-361 (LLAIGLTNMLGSFVSSYPITG) form a helical membrane-spanning segment. Topologically, residues 362–373 (SFGRTAVNAQSG) are cytoplasmic. Residues 374-394 (VCTPAGGLVTGALVLLSLDYL) form a helical membrane-spanning segment. Topologically, residues 395–397 (TSL) are extracellular. The helical transmembrane segment at 398–418 (FYYIPKAALAAVIIMAVVPLF) threads the bilayer. Over 419–447 (DTKIFGMLWRVKRLDLLPLCATFLLCFWE) the chain is Cytoplasmic. The helical transmembrane segment at 448–468 (VQYGILAGTLVSTLFLLHFVA) threads the bilayer. Residues 469 to 605 (RPKTQVSEGP…PEHKVTLLTA (137 aa)) are Extracellular-facing. The region spanning 479–582 (VLILQLASGL…EKAEQYVRQE (104 aa)) is the STAS domain.

The protein belongs to the SLC26A/SulP transporter (TC 2.A.53) family.

It localises to the cell membrane. The protein localises to the lysosome membrane. The protein resides in the apical cell membrane. It is found in the basolateral cell membrane. The catalysed reaction is hydrogencarbonate(in) + chloride(out) = hydrogencarbonate(out) + chloride(in). It catalyses the reaction sulfate(in) + H(+)(in) = sulfate(out) + H(+)(out). It carries out the reaction oxalate(in) + chloride(out) = oxalate(out) + chloride(in). In terms of biological role, sodium-independent anion exchanger mediating bicarbonate, chloride, sulfate and oxalate transport. Exhibits sodium-independent sulfate anion transporter activity that may cooperate with SLC26A2 to mediate DIDS-sensitive sulfate uptake into high endothelial venules endothelial cells (HEVEC). In the kidney, mediates chloride-bicarbonate exchange, facilitating V-ATPase-mediated acid secretion. May function as a chloride channel, playing an important role in moderating chloride homeostasis and neuronal activity in the cerebellum. The polypeptide is Sodium-independent sulfate anion transporter (Slc26a11) (Cavia porcellus (Guinea pig)).